Here is a 361-residue protein sequence, read N- to C-terminus: tRNA pseudouridine synthase D (361 aa).

The Nucleophile role is filled by D76. Positions G151 to I318 constitute a TRUD domain.

The protein belongs to the pseudouridine synthase TruD family.

The catalysed reaction is uridine(13) in tRNA = pseudouridine(13) in tRNA. Functionally, responsible for synthesis of pseudouridine from uracil-13 in transfer RNAs. In Wolinella succinogenes (strain ATCC 29543 / DSM 1740 / CCUG 13145 / JCM 31913 / LMG 7466 / NCTC 11488 / FDC 602W) (Vibrio succinogenes), this protein is tRNA pseudouridine synthase D.